The sequence spans 494 residues: Endoglucanase 1 (494 aa).

The N-terminal stretch at 1–25 (MDCSSPLSLFHLLLVCTVMVKCCSA) is a signal peptide. Catalysis depends on D82, which acts as the Nucleophile. N254 and N359 each carry an N-linked (GlcNAc...) asparagine glycan. Active-site residues include H411, D462, and E471.

This sequence belongs to the glycosyl hydrolase 9 (cellulase E) family.

It carries out the reaction Endohydrolysis of (1-&gt;4)-beta-D-glucosidic linkages in cellulose, lichenin and cereal beta-D-glucans.. Its function is as follows. Involved in ripening fruit process. The chain is Endoglucanase 1 (CEL1) from Persea americana (Avocado).